The chain runs to 52 residues: Metchnikowin (52 aa).

The N-terminal stretch at 1–24 is a signal peptide; that stretch reads MQLNLGAIFLALLGVMATATSVLA. Positions 25-26 are excised as a propeptide; it reads EP. Residues 28–52 form a disordered region; the sequence is RHQGPIFDTRPSPFNPNQPRPGPIY. The segment covering 40-52 has biased composition (pro residues); sequence PFNPNQPRPGPIY.

Hemolymph (at protein level). Highest expression in fat body.

The protein localises to the secreted. In terms of biological role, potent antifungal and antibacterial activity against Gram-positive bacteria. The polypeptide is Metchnikowin (Mtk) (Drosophila melanogaster (Fruit fly)).